The chain runs to 181 residues: MIDLNKISKVVVVFIVLLTFLVLMMQSQEVKVAGLLIQFENETTEPEVTAILENYDIPVNYTIDYNSNIGRGVYYVKVDEDKINELRKNENLISEIELKKGNYNIIILSEEFVPDENFLTILEKNNLQLKKVVVCYIHFGDGPADWVVGKNCILERDAIRIKNELETNEKVLIVGLDDIEG.

Belongs to the UPF0228 family.

The protein is UPF0228 protein MA_3117 of Methanosarcina acetivorans (strain ATCC 35395 / DSM 2834 / JCM 12185 / C2A).